A 318-amino-acid chain; its full sequence is Transcription factor FER-LIKE IRON DEFICIENCY-INDUCED TRANSCRIPTION FACTOR (318 aa).

Residues 90-138 are disordered; sequence FDGDSVRAGGEEDEEDYNDGDDSSATTTNNDGTRKTKTDRSRTLISERR. Residues 100-111 show a composition bias toward acidic residues; it reads EEDEEDYNDGDD. The segment covering 121 to 136 has biased composition (basic and acidic residues); that stretch reads GTRKTKTDRSRTLISE. Residues 127–176 form the bHLH domain; that stretch reads TDRSRTLISERRRRGRMKDKLYALRSLVPNITKMDKASIVGDAVLYVQEL.

Homodimer. As to expression, expressed in roots and inflorescence, and to a lower extent, in leaves and stems. In roots, confined to the outer cell layers, specifically in the differentiation zone. Also detected in the endodermis and inner tissues of the central cylinder.

It localises to the nucleus. In terms of biological role, transcription factor. Essential protein involved in iron uptake responses. Regulates FRO2 at the level of mRNA accumulation and IRT1 at the level of protein accumulation. Confers enhanced iron mobilization responses at low iron supply. This Arabidopsis thaliana (Mouse-ear cress) protein is Transcription factor FER-LIKE IRON DEFICIENCY-INDUCED TRANSCRIPTION FACTOR (FIT).